Consider the following 160-residue polypeptide: Protein MGF 300-2R (160 aa).

This sequence belongs to the asfivirus MGF 300 family.

Functionally, plays a role in virus cell tropism, and may be required for efficient virus replication in macrophages. This is Protein MGF 300-2R from African swine fever virus (isolate Tick/Malawi/Lil 20-1/1983) (ASFV).